The following is a 365-amino-acid chain: Geissoschizine synthase (365 aa).

C51 is a Zn(2+) binding site. Position 52 (N52) interacts with NADP(+). Zn(2+)-binding residues include H73, E74, C104, C107, C110, C118, and C169. Positions 195, 197, 198, 217, 218, 219, 222, 262, 281, 283, 305, 307, and 352 each coordinate NADP(+).

It belongs to the zinc-containing alcohol dehydrogenase family. Class-III subfamily. In terms of assembly, homodimer. Zn(2+) serves as cofactor. Mainly expressed in roots and, to a lower level, in leaves.

The catalysed reaction is (19E)-geissoschizine + NADP(+) = 4,21-dehydrogeissoschizine + NADPH. The protein operates within alkaloid biosynthesis; ajmaline biosynthesis. In terms of biological role, alcohol dehydrogenase involved in the biosynthesis of ajmaline-type monoterpenoid indole alkaloids (MIAs) natural products, important plant-derived pharmaceuticals used in the therapy of heart disorders. Catalyzes iminium reduction on 4,21-dehydrogeissoschizine to produce 19E-geissoschizine, precursor of vomilenine, an intermediate chemical in the biosynthesis of ajmaline. In Rauvolfia serpentina (Serpentine wood), this protein is Geissoschizine synthase.